The following is a 102-amino-acid chain: U6 snRNA-associated Sm-like protein LSm3 (102 aa).

An N-acetylalanine modification is found at Ala-2. Positions Glu-16 to Val-101 constitute a Sm domain.

It belongs to the snRNP Sm proteins family. In terms of assembly, component of the precatalytic spliceosome (spliceosome B complex). Component of the U4/U6-U5 tri-snRNP complex, a building block of the precatalytic spliceosome (spliceosome B complex). The U4/U6-U5 tri-snRNP complex is composed of the U4, U6 and U5 snRNAs and at least PRPF3, PRPF4, PRPF6, PRPF8, PRPF31, SNRNP200, TXNL4A, SNRNP40, SNRPB, SNRPD1, SNRPD2, SNRPD3, SNRPE, SNRPF, SNRPG, DDX23, CD2BP2, PPIH, SNU13, EFTUD2, SART1 and USP39, plus LSM2, LSM3, LSM4, LSM5, LSM6, LSM7 and LSM8. LSM2, LSM3, LSM4, LSM5, LSM6, LSM7 and LSM8 form a heptameric, ring-shaped subcomplex (the LSM2-8 complex) that is part of the U4/U6-U5 tri-snRNP complex and the precatalytic spliceosome.

It is found in the nucleus. In terms of biological role, plays a role in pre-mRNA splicing as component of the U4/U6-U5 tri-snRNP complex that is involved in spliceosome assembly, and as component of the precatalytic spliceosome (spliceosome B complex). The heptameric LSM2-8 complex binds specifically to the 3'-terminal U-tract of U6 snRNA. In Bos taurus (Bovine), this protein is U6 snRNA-associated Sm-like protein LSm3 (LSM3).